The chain runs to 769 residues: Serine protease HtrA-like (769 aa).

Positions 1–20 (MDIGKKHVIPKSQYRRKRRE) are enriched in basic residues. A disordered region spans residues 1 to 390 (MDIGKKHVIP…ATSKLNKGRA (390 aa)). Composition is skewed to basic and acidic residues over residues 21-64 (FFHN…ERFK) and 71-108 (LEQR…DVSK). The segment covering 126-137 (YEQNSEATLSTK) has biased composition (polar residues). Positions 138-186 (STDKVESTDMRKLSSDKNKVGHEEQHVLSKPSEHDKETRIDFESSRTDS) are enriched in basic and acidic residues. Residues 247–262 (QQSQNEQTKTYTYGDS) show a composition bias toward polar residues. Composition is skewed to basic and acidic residues over residues 264–296 (QNDK…HIVD) and 310–330 (KTDD…HKQN). Polar residues predominate over residues 331 to 347 (ADSSETVGYQSQSSASH). Over residues 348–364 (RITEKRNNAINDHDKLN) the composition is skewed to basic and acidic residues. Residues 366–390 (QKPNAKTSANNNQKKATSKLNKGRA) show a composition bias toward polar residues. The helical transmembrane segment at 410–430 (LVILMGIIILIVILNAIFNNV) threads the bilayer. Active-site charge relay system residues include histidine 504, aspartate 534, and serine 619. One can recognise a PDZ domain in the interval 680 to 733 (IASLNSFERQAVKLPGKVKNGVVVDQVDNNGLADQSGLKKGDVITELDGKLLED).

This sequence belongs to the peptidase S1C family.

The protein localises to the cell membrane. The sequence is that of Serine protease HtrA-like from Staphylococcus aureus (strain MSSA476).